Reading from the N-terminus, the 338-residue chain is 1-aminocyclopropane-1-carboxylate deaminase (338 aa).

K51 carries the post-translational modification N6-(pyridoxal phosphate)lysine. S78 (nucleophile) is an active-site residue.

This sequence belongs to the ACC deaminase/D-cysteine desulfhydrase family. It depends on pyridoxal 5'-phosphate as a cofactor.

The catalysed reaction is 1-aminocyclopropane-1-carboxylate + H2O = 2-oxobutanoate + NH4(+). Its function is as follows. Catalyzes a cyclopropane ring-opening reaction, the irreversible conversion of 1-aminocyclopropane-1-carboxylate (ACC) to ammonia and alpha-ketobutyrate. Allows growth on ACC as a nitrogen source. The chain is 1-aminocyclopropane-1-carboxylate deaminase from Enterobacter cloacae.